A 35-amino-acid chain; its full sequence is MEALVYTFLLVSTLGIIFFAIFFREPPKVPTKGGK.

Residues 3–23 (ALVYTFLLVSTLGIIFFAIFF) form a helical membrane-spanning segment.

Belongs to the PsbT family. As to quaternary structure, PSII is composed of 1 copy each of membrane proteins PsbA, PsbB, PsbC, PsbD, PsbE, PsbF, PsbH, PsbI, PsbJ, PsbK, PsbL, PsbM, PsbT, PsbY, PsbZ, Psb30/Ycf12, at least 3 peripheral proteins of the oxygen-evolving complex and a large number of cofactors. It forms dimeric complexes.

The protein resides in the plastid. The protein localises to the chloroplast thylakoid membrane. Its function is as follows. Found at the monomer-monomer interface of the photosystem II (PS II) dimer, plays a role in assembly and dimerization of PSII. PSII is a light-driven water plastoquinone oxidoreductase, using light energy to abstract electrons from H(2)O, generating a proton gradient subsequently used for ATP formation. The sequence is that of Photosystem II reaction center protein T from Cedrus deodara (Deodar cedar).